The following is a 119-amino-acid chain: Large ribosomal subunit protein uL22c (119 aa).

This sequence belongs to the universal ribosomal protein uL22 family. As to quaternary structure, part of the 50S ribosomal subunit.

It is found in the plastid. The protein resides in the chloroplast. In terms of biological role, this protein binds specifically to 23S rRNA. The globular domain of the protein is located near the polypeptide exit tunnel on the outside of the subunit, while an extended beta-hairpin is found that lines the wall of the exit tunnel in the center of the 70S ribosome. This Chlorokybus atmophyticus (Soil alga) protein is Large ribosomal subunit protein uL22c (rpl22).